Here is a 331-residue protein sequence, read N- to C-terminus: L-lactate dehydrogenase A chain (331 aa).

NAD(+)-binding positions include 29 to 57 (GMVG…MEDK) and arginine 98. Residues arginine 105, asparagine 137, and arginine 168 each coordinate substrate. Asparagine 137 lines the NAD(+) pocket. The active-site Proton acceptor is histidine 192. Residue threonine 247 participates in substrate binding.

The protein belongs to the LDH/MDH superfamily. LDH family. In terms of assembly, homotetramer.

It is found in the cytoplasm. It carries out the reaction (S)-lactate + NAD(+) = pyruvate + NADH + H(+). It functions in the pathway fermentation; pyruvate fermentation to lactate; (S)-lactate from pyruvate: step 1/1. Functionally, interconverts simultaneously and stereospecifically pyruvate and lactate with concomitant interconversion of NADH and NAD(+). The sequence is that of L-lactate dehydrogenase A chain (ldha) from Paranotothenia magellanica (Maori cod).